The chain runs to 110 residues: Snake venom vascular endothelial growth factor toxin ICPP (110 aa).

The residue at position 1 (glutamine 1) is a Pyrrolidone carboxylic acid. Disulfide bonds link cysteine 14–cysteine 56, cysteine 45–cysteine 91, and cysteine 49–cysteine 93.

As to quaternary structure, homodimer; disulfide-linked. Interacts with high affinity with KDR/VEGFR-2, and with a lower affinity with neuropilin-1 (NRP1) and neuropilin-2 (NRP2). In terms of tissue distribution, expressed by the venom gland.

The protein resides in the secreted. Snake venom VEGFs may contribute to venom dispersion and prey subjugation by inducing vascular permeability and hypotension. This protein increases vascular permeability and angiogenesis probably through VEGF receptor (KDR/VEGFR-2) signaling. Induces DNA synthesis in human umbilical vein endothelial cells, and promotes mouse embryonic stem cell proliferation and differentiation. It may also induce a drastic hypotensive effect after intravenous injection. The hypotension is mediated by nitric oxide (NO), which is produced by VEGF-activated endothelium NO synthase. The protein is Snake venom vascular endothelial growth factor toxin ICPP of Macrovipera lebetinus (Levantine viper).